The primary structure comprises 467 residues: MFEKMTIEDCLSKESDLINLSLERIKCIDSAVKSFITVVDKQEELEGPYKGIPIAIKDNITTKNIRTTCGSKMLENYTPPYDATCVKRLKNYGFAIVGKTNLDEFAMGSSTERSAFFVTRNPWDLDYVAGGSSGGSAAAVASGEVVAALGSDTGGSVRQPAAFCGIVGFKPTYGLVSRYGLVAFASSLDQIGPMTKSVRDAALIMEVIAGKDPMDSTTVSKKLDFLTHIEDGISGMKFAVPEEVYKYEQLDREVSDRFEEALKTAEKLGAKVSRVKIPTIKYAVATYYIIAPAEASSNLARYDGVKYGLRIEEPGLMDTYMKTRNVGFGEEVRRRIFLGTFTLSAAYYEAYFGKAQKVRKLLSDDLNRVLADFDAILTPTSPSPAFKIGSVADPLTYYLMDIFTIPANLSGLPAISVPFGFAKNLPVGLQIMGRRFDDPKVLAIARAFEKYSPYNINGRIPLPVVRI.

Residues lysine 57 and serine 132 each act as charge relay system in the active site. Serine 156 serves as the catalytic Acyl-ester intermediate.

This sequence belongs to the amidase family. GatA subfamily. Heterotrimer of A, B and C subunits.

The enzyme catalyses L-glutamyl-tRNA(Gln) + L-glutamine + ATP + H2O = L-glutaminyl-tRNA(Gln) + L-glutamate + ADP + phosphate + H(+). Functionally, allows the formation of correctly charged Gln-tRNA(Gln) through the transamidation of misacylated Glu-tRNA(Gln) in organisms which lack glutaminyl-tRNA synthetase. The reaction takes place in the presence of glutamine and ATP through an activated gamma-phospho-Glu-tRNA(Gln). The polypeptide is Glutamyl-tRNA(Gln) amidotransferase subunit A (Pseudothermotoga lettingae (strain ATCC BAA-301 / DSM 14385 / NBRC 107922 / TMO) (Thermotoga lettingae)).